Here is a 119-residue protein sequence, read N- to C-terminus: Large ribosomal subunit protein uL18 (119 aa).

It belongs to the universal ribosomal protein uL18 family. As to quaternary structure, part of the 50S ribosomal subunit; part of the 5S rRNA/L5/L18/L25 subcomplex. Contacts the 5S and 23S rRNAs.

This is one of the proteins that bind and probably mediate the attachment of the 5S RNA into the large ribosomal subunit, where it forms part of the central protuberance. The chain is Large ribosomal subunit protein uL18 from Nitratidesulfovibrio vulgaris (strain DP4) (Desulfovibrio vulgaris).